The chain runs to 303 residues: 4-diphosphocytidyl-2-C-methyl-D-erythritol kinase (303 aa).

Residue Lys18 is part of the active site. ATP is bound at residue 111-121 (PVASGIGGGSA). Residue Asp153 is part of the active site.

Belongs to the GHMP kinase family. IspE subfamily.

The catalysed reaction is 4-CDP-2-C-methyl-D-erythritol + ATP = 4-CDP-2-C-methyl-D-erythritol 2-phosphate + ADP + H(+). It participates in isoprenoid biosynthesis; isopentenyl diphosphate biosynthesis via DXP pathway; isopentenyl diphosphate from 1-deoxy-D-xylulose 5-phosphate: step 3/6. In terms of biological role, catalyzes the phosphorylation of the position 2 hydroxy group of 4-diphosphocytidyl-2C-methyl-D-erythritol. The protein is 4-diphosphocytidyl-2-C-methyl-D-erythritol kinase of Sinorhizobium medicae (strain WSM419) (Ensifer medicae).